A 382-amino-acid polypeptide reads, in one-letter code: GTPase Obg (382 aa).

Residues 2-161 (VKFADESKIR…REIIVELNII (160 aa)) enclose the Obg domain. The 167-residue stretch at 162–328 (ADIGLVGFPN…VKKAFIRLAD (167 aa)) folds into the OBG-type G domain. GTP contacts are provided by residues 168–175 (GFPNAGKS), 193–197 (FTTKI), 215–218 (DIPG), 282–285 (TKLD), and 309–311 (SLY). 2 residues coordinate Mg(2+): Ser-175 and Thr-195. Residues 360–382 (EEKNDDEHFGATVSLSRKRKPKK) are disordered.

This sequence belongs to the TRAFAC class OBG-HflX-like GTPase superfamily. OBG GTPase family. As to quaternary structure, monomer. Mg(2+) serves as cofactor.

It is found in the cytoplasm. In terms of biological role, an essential GTPase which binds GTP, GDP and possibly (p)ppGpp with moderate affinity, with high nucleotide exchange rates and a fairly low GTP hydrolysis rate. Plays a role in control of the cell cycle, stress response, ribosome biogenesis and in those bacteria that undergo differentiation, in morphogenesis control. The sequence is that of GTPase Obg from Treponema denticola (strain ATCC 35405 / DSM 14222 / CIP 103919 / JCM 8153 / KCTC 15104).